We begin with the raw amino-acid sequence, 239 residues long: MEEKKLLFNIGPIWFDGTIVLMVLLTCIIVFAFVYACTRNMKLRPKGKQTVIEWLVDFIRGIITDNLPRKEVSNFHLMAFTLFMFVLVSNILGLVTKIVVGDDLSVWKSPTADPIVTLTLAMMMIVLTHFFGMKRFGFKGYLVNSYLRPVGFLLPVKLMEEFTNLLTLGLRLYGNIFAGEVLLGLIAGTVASVGLWVIPLAIPLEMIWVAFSIFIGCIQAFIFVTLSMVYMSHKIETEE.

The next 5 helical transmembrane spans lie at 13 to 33 (IWFDGTIVLMVLLTCIIVFAF), 75 to 95 (FHLMAFTLFMFVLVSNILGLV), 113 to 133 (DPIVTLTLAMMMIVLTHFFGM), 174 to 194 (GNIFAGEVLLGLIAGTVASVG), and 208 to 230 (WVAFSIFIGCIQAFIFVTLSMVY).

It belongs to the ATPase A chain family. In terms of assembly, F-type ATPases have 2 components, CF(1) - the catalytic core - and CF(0) - the membrane proton channel. CF(1) has five subunits: alpha(3), beta(3), gamma(1), delta(1), epsilon(1). CF(0) has three main subunits: a(1), b(2) and c(9-12). The alpha and beta chains form an alternating ring which encloses part of the gamma chain. CF(1) is attached to CF(0) by a central stalk formed by the gamma and epsilon chains, while a peripheral stalk is formed by the delta and b chains.

The protein localises to the cell membrane. In terms of biological role, key component of the proton channel; it plays a direct role in the translocation of protons across the membrane. This chain is ATP synthase subunit a, found in Enterococcus faecalis (strain ATCC 700802 / V583).